Here is a 227-residue protein sequence, read N- to C-terminus: Peroxiredoxin-like 2A (227 aa).

Residues 13–111 (LWSISIGAFG…DQLGVPLYAI (99 aa)) form a thioredoxin fold region. Residues cysteine 84 and cysteine 87 each act as redox-active in the active site.

Belongs to the peroxiredoxin-like PRXL2 family. PRXL2A subfamily.

The protein localises to the cytoplasm. In terms of biological role, involved in redox regulation of the cell. Acts as an antioxidant. The chain is Peroxiredoxin-like 2A (prxl2a) from Xenopus laevis (African clawed frog).